The primary structure comprises 282 residues: NADPH-dependent 7-cyano-7-deazaguanine reductase (282 aa).

88 to 90 (IES) lines the substrate pocket. Position 90–91 (90–91 (SK)) interacts with NADPH. Cys-190 serves as the catalytic Thioimide intermediate. Asp-197 functions as the Proton donor in the catalytic mechanism. Substrate is bound at residue 229 to 230 (HE). NADPH is bound at residue 258-259 (RG).

It belongs to the GTP cyclohydrolase I family. QueF type 2 subfamily. In terms of assembly, homodimer.

Its subcellular location is the cytoplasm. It catalyses the reaction 7-aminomethyl-7-carbaguanine + 2 NADP(+) = 7-cyano-7-deazaguanine + 2 NADPH + 3 H(+). Its pathway is tRNA modification; tRNA-queuosine biosynthesis. Functionally, catalyzes the NADPH-dependent reduction of 7-cyano-7-deazaguanine (preQ0) to 7-aminomethyl-7-deazaguanine (preQ1). This chain is NADPH-dependent 7-cyano-7-deazaguanine reductase, found in Salmonella schwarzengrund (strain CVM19633).